The primary structure comprises 355 residues: RNA 3'-terminal phosphate cyclase (355 aa).

ATP is bound by residues Gln-100 and 300–304; that span reads HLADQ. The active-site Tele-AMP-histidine intermediate is the His-325.

Belongs to the RNA 3'-terminal cyclase family. Type 1 subfamily.

The protein localises to the cytoplasm. It carries out the reaction a 3'-end 3'-phospho-ribonucleotide-RNA + ATP = a 3'-end 2',3'-cyclophospho-ribonucleotide-RNA + AMP + diphosphate. In terms of biological role, catalyzes the conversion of 3'-phosphate to a 2',3'-cyclic phosphodiester at the end of RNA. The mechanism of action of the enzyme occurs in 3 steps: (A) adenylation of the enzyme by ATP; (B) transfer of adenylate to an RNA-N3'P to produce RNA-N3'PP5'A; (C) and attack of the adjacent 2'-hydroxyl on the 3'-phosphorus in the diester linkage to produce the cyclic end product. The biological role of this enzyme is unknown but it is likely to function in some aspects of cellular RNA processing. The polypeptide is RNA 3'-terminal phosphate cyclase (Methanosarcina acetivorans (strain ATCC 35395 / DSM 2834 / JCM 12185 / C2A)).